We begin with the raw amino-acid sequence, 269 residues long: 2-dehydro-3-deoxyphosphooctonate aldolase (269 aa).

It belongs to the KdsA family.

The protein localises to the cytoplasm. It catalyses the reaction D-arabinose 5-phosphate + phosphoenolpyruvate + H2O = 3-deoxy-alpha-D-manno-2-octulosonate-8-phosphate + phosphate. It functions in the pathway carbohydrate biosynthesis; 3-deoxy-D-manno-octulosonate biosynthesis; 3-deoxy-D-manno-octulosonate from D-ribulose 5-phosphate: step 2/3. The protein operates within bacterial outer membrane biogenesis; lipopolysaccharide biosynthesis. In Chlamydia caviae (strain ATCC VR-813 / DSM 19441 / 03DC25 / GPIC) (Chlamydophila caviae), this protein is 2-dehydro-3-deoxyphosphooctonate aldolase.